We begin with the raw amino-acid sequence, 238 residues long: Probable tetraspanin tspC (238 aa).

Topologically, residues 1–16 (MVNTRDFLPKTTHYLK) are cytoplasmic. Residues 17 to 37 (VPIIGLNAILWLLGLVLIVVG) traverse the membrane as a helical segment. Residues 38-69 (SVCISFFSNFKEFTKESGYKNALSNLTTSAPT) lie on the Extracellular side of the membrane. N-linked (GlcNAc...) asparagine glycosylation is present at N62. The helical transmembrane segment at 70-90 (GVLVIGIFFILLTLVGCFVAY) threads the bilayer. Residues 91–93 (KEK) lie on the Cytoplasmic side of the membrane. Residues 94-114 (LVGLVLYTMLMLILLVVLIGI) form a helical membrane-spanning segment. Topologically, residues 115–197 (GGKALTLDKE…GIFTKQVSSK (83 aa)) are extracellular. N143 and N164 each carry an N-linked (GlcNAc...) asparagine glycan. Residues 198–218 (LVLVGIAGVVIGCIEFVAMAL) traverse the membrane as a helical segment. At 219 to 238 (SLFLIIRICRSPRSRAYDQY) the chain is on the cytoplasmic side.

This sequence belongs to the tetraspanin (TM4SF) family.

The protein resides in the membrane. The protein is Probable tetraspanin tspC (tspC) of Dictyostelium discoideum (Social amoeba).